The following is a 507-amino-acid chain: Glutamyl-tRNA(Gln) amidotransferase subunit A, mitochondrial (507 aa).

The interval 29 to 51 (THPPEPIPPPPPPAPSSSPSPKQ) is disordered. Pro residues predominate over residues 31 to 46 (PPEPIPPPPPPAPSSS). Residues K57 and S135 each act as charge relay system in the active site. S159 serves as the catalytic Acyl-ester intermediate.

Belongs to the amidase family. GatA subfamily. In terms of assembly, subunit of the heterotrimeric GatCAB amidotransferase (AdT) complex, composed of A, B and C subunits.

It is found in the mitochondrion. It carries out the reaction L-glutamyl-tRNA(Gln) + L-glutamine + ATP + H2O = L-glutaminyl-tRNA(Gln) + L-glutamate + ADP + phosphate + H(+). Its function is as follows. Allows the formation of correctly charged Gln-tRNA(Gln) through the transamidation of misacylated Glu-tRNA(Gln) in the mitochondria. The reaction takes place in the presence of glutamine and ATP through an activated gamma-phospho-Glu-tRNA(Gln). The polypeptide is Glutamyl-tRNA(Gln) amidotransferase subunit A, mitochondrial (Podospora anserina (strain S / ATCC MYA-4624 / DSM 980 / FGSC 10383) (Pleurage anserina)).